We begin with the raw amino-acid sequence, 398 residues long: NADH-ubiquinone oxidoreductase 49 kDa subunit (398 aa).

The protein belongs to the complex I 49 kDa subunit family.

The protein localises to the mitochondrion. It catalyses the reaction a ubiquinone + NADH + 5 H(+)(in) = a ubiquinol + NAD(+) + 4 H(+)(out). Functionally, core subunit of the mitochondrial membrane respiratory chain NADH dehydrogenase (Complex I) that is believed to belong to the minimal assembly required for catalysis. Complex I functions in the transfer of electrons from NADH to the respiratory chain. The immediate electron acceptor for the enzyme is believed to be ubiquinone. Component of the iron-sulfur (IP) fragment of the enzyme. Component of the iron-sulfur (IP) fragment of the enzyme. This is NADH-ubiquinone oxidoreductase 49 kDa subunit (NAD7) from Cafeteria roenbergensis (Marine flagellate).